The sequence spans 156 residues: Peptidyl-prolyl cis-trans isomerase cypE (156 aa).

The PPIase cyclophilin-type domain occupies 2 to 155; it reads TEQTVTLQTT…DEIRIIKATA (154 aa).

The protein belongs to the cyclophilin-type PPIase family. As to quaternary structure, interacts with snwA.

It localises to the cytoplasm. It is found in the nucleus. The catalysed reaction is [protein]-peptidylproline (omega=180) = [protein]-peptidylproline (omega=0). In terms of biological role, catalyzes the cis-trans isomerization of proline imidic peptide bonds in oligopeptides. Plays a role in protein folding, transport and assembly. This Dictyostelium discoideum (Social amoeba) protein is Peptidyl-prolyl cis-trans isomerase cypE (cypE).